A 118-amino-acid polypeptide reads, in one-letter code: MPRVKGGTVTRQRRKKVIKLAKGYYGSKSTLFKVANQQVMKSLMYAFRDRRQKKRDFRKLWITRINAAARMNGLSYSRLMHGLKNAGIEVNRKMLADLAVHDEKAFAELATVAKNNIN.

Belongs to the bacterial ribosomal protein bL20 family.

Its function is as follows. Binds directly to 23S ribosomal RNA and is necessary for the in vitro assembly process of the 50S ribosomal subunit. It is not involved in the protein synthesizing functions of that subunit. In Bacillus mycoides (strain KBAB4) (Bacillus weihenstephanensis), this protein is Large ribosomal subunit protein bL20.